A 362-amino-acid chain; its full sequence is tRNA/tmRNA (uracil-C(5))-methyltransferase (362 aa).

5 residues coordinate S-adenosyl-L-methionine: Q182, Y210, N215, E231, and D293. The active-site Nucleophile is C318. E352 (proton acceptor) is an active-site residue.

Belongs to the class I-like SAM-binding methyltransferase superfamily. RNA M5U methyltransferase family. TrmA subfamily.

It carries out the reaction uridine(54) in tRNA + S-adenosyl-L-methionine = 5-methyluridine(54) in tRNA + S-adenosyl-L-homocysteine + H(+). The catalysed reaction is uridine(341) in tmRNA + S-adenosyl-L-methionine = 5-methyluridine(341) in tmRNA + S-adenosyl-L-homocysteine + H(+). In terms of biological role, dual-specificity methyltransferase that catalyzes the formation of 5-methyluridine at position 54 (m5U54) in all tRNAs, and that of position 341 (m5U341) in tmRNA (transfer-mRNA). The chain is tRNA/tmRNA (uracil-C(5))-methyltransferase from Neisseria gonorrhoeae (strain ATCC 700825 / FA 1090).